We begin with the raw amino-acid sequence, 310 residues long: p-hydroxybenzoic acid efflux pump subunit AaeA (310 aa).

Residues 12–32 (AITLVLVILAFIAIFRAWVYY) traverse the membrane as a helical segment.

The protein belongs to the membrane fusion protein (MFP) (TC 8.A.1) family.

The protein resides in the cell inner membrane. Its function is as follows. Forms an efflux pump with AaeB. The polypeptide is p-hydroxybenzoic acid efflux pump subunit AaeA (Salmonella schwarzengrund (strain CVM19633)).